The chain runs to 309 residues: Calponin-2 (309 aa).

Position 2 is an N-acetylserine (Ser2). N6-acetyllysine occurs at positions 8 and 25. The Calponin-homology (CH) domain occupies Pro28–Lys132. Ser138 carries the post-translational modification Phosphoserine. 3 Calponin-like repeats span residues Ile166–Tyr191, Ile206–Tyr231, and Met245–Tyr269. A disordered region spans residues Ala283–Tyr309.

This sequence belongs to the calponin family. Heart and smooth muscle.

Thin filament-associated protein that is implicated in the regulation and modulation of smooth muscle contraction. It is capable of binding to actin, calmodulin and tropomyosin. The interaction of calponin with actin inhibits the actomyosin Mg-ATPase activity. The sequence is that of Calponin-2 (CNN2) from Homo sapiens (Human).